The following is a 75-amino-acid chain: Small ribosomal subunit protein bS18 (75 aa).

It belongs to the bacterial ribosomal protein bS18 family. In terms of assembly, part of the 30S ribosomal subunit. Forms a tight heterodimer with protein bS6.

In terms of biological role, binds as a heterodimer with protein bS6 to the central domain of the 16S rRNA, where it helps stabilize the platform of the 30S subunit. The sequence is that of Small ribosomal subunit protein bS18 from Pseudoalteromonas translucida (strain TAC 125).